We begin with the raw amino-acid sequence, 265 residues long: Neuronal membrane glycoprotein M6-b (265 aa).

A helical transmembrane segment spans residues 31 to 51; it reads GGVPYASLVATILCFSGVALF. N-linked (GlcNAc...) asparagine glycosylation occurs at asparagine 73. The next 2 membrane-spanning stretches (helical) occupy residues 90–110 and 136–156; these read VIYG…AEGF and FVFL…FSAV. A glycan (N-linked (GlcNAc...) asparagine) is linked at asparagine 177. A helical transmembrane segment spans residues 224 to 244; sequence LFIVACAGAGATVIALLIYMM. Serine 257 is modified (phosphoserine).

This sequence belongs to the myelin proteolipid protein family. Interacts with SERT.

It is found in the membrane. The protein localises to the cell membrane. In terms of biological role, may be involved in neural development. Involved in regulation of osteoblast function and bone formation. Involved in matrix vesicle release by osteoblasts; this function seems to involve maintenance of the actin cytoskeleton. May be involved in cellular trafficking of SERT and thereby in regulation of serotonin uptake. The chain is Neuronal membrane glycoprotein M6-b (GPM6B) from Pongo abelii (Sumatran orangutan).